Here is a 532-residue protein sequence, read N- to C-terminus: Pentatricopeptide repeat-containing protein At5g66500, mitochondrial (532 aa).

A mitochondrion-targeting transit peptide spans 1-33; it reads MFACLRIGRFIRLGNVTVKSTNLVLRCVFIRNF. PPR repeat units lie at residues 48–82, 83–117, 118–148, 149–183, 184–218, 223–248, 250–280, 281–314, 315–345, 346–380, 383–413, and 419–453; these read DLSSLNSQLSSHLRSGNPNDTLALFLQIHRASPDL, SSHTFTPVLGACSLLSYPETGRQVHALMIKQGAET, GTISKTALIDMYSKYGHLVDSVRVFESVEEK, DLVSWNALLSGFLRNGKGKEALGVFAAMYRERVEI, SEFTLSSVVKTCASLKILQQGKQVHAMVVVTGRDL, TAMISFYSSVGLINEAMKVYNSLNVH, DEVMLNSLISGCIRNRNYKEAFLLMSRQRPN, VRVLSSSLAGCSDNSDLWIGKQIHCVALRNGFVS, DSKLCNGLMDMYGKCGQIVQARTIFRAIPSK, SVVSWTSMIDAYAVNGDGVKALEIFREMCEEGSGV, NSVTFLVVISACAHAGLVKEGKECFGMMKEK, and GTEHYVCFIDILSKAGETEEIWRLVERMMENDNQS. The segment at 458–532 is type E motif; degenerate; sequence IWVAVLSACS…VKTAGHSLFI (75 aa).

It belongs to the PPR family. PCMP-E subfamily.

The protein localises to the mitochondrion. The chain is Pentatricopeptide repeat-containing protein At5g66500, mitochondrial (PCMP-E38) from Arabidopsis thaliana (Mouse-ear cress).